Here is a 343-residue protein sequence, read N- to C-terminus: Phosphoglycerate mutase-like protein 2 (343 aa).

A chloroplast-targeting transit peptide spans 1 to 35 (MIHQSMTSNLSFYISSVSHLSSPLPSLSRLSLRCC). His-65 (tele-phosphohistidine intermediate) is an active-site residue. The active-site Proton donor/acceptor is the Glu-177. The tract at residues 322–343 (MTNYPGTILTGEDASSDIADQK) is disordered.

Belongs to the phosphoglycerate mutase family.

It is found in the plastid. The protein resides in the chloroplast. Functionally, may play a role in carbohydrates metabolism. This Arabidopsis thaliana (Mouse-ear cress) protein is Phosphoglycerate mutase-like protein 2.